A 474-amino-acid polypeptide reads, in one-letter code: Probable CAAX prenyl protease 1 (474 aa).

The next 3 membrane-spanning stretches (helical) occupy residues 103 to 123 (SWFS…IIKY), 196 to 216 (IFVI…SVVV), and 230 to 250 (FIMY…TIAP). A Zn(2+)-binding site is contributed by histidine 332. The active site involves glutamate 333. A Zn(2+)-binding site is contributed by histidine 336. The next 2 helical transmembrane spans lie at 344-364 (INTI…AAFI) and 381-401 (VIVG…ILTF). Zn(2+) is bound at residue glutamate 411. Aspartate 415 (proton donor) is an active-site residue.

It belongs to the peptidase M48A family. Zn(2+) serves as cofactor.

Its subcellular location is the endoplasmic reticulum membrane. The catalysed reaction is Hydrolyzes the peptide bond -P2-(S-farnesyl or geranylgeranyl)C-P1'-P2'-P3'-COOH where P1' and P2' are amino acids with aliphatic side chains and P3' is any C-terminal residue.. Proteolytically removes the C-terminal three residues of farnesylated proteins. This Schizosaccharomyces pombe (strain 972 / ATCC 24843) (Fission yeast) protein is Probable CAAX prenyl protease 1.